The primary structure comprises 396 residues: 1-deoxy-D-xylulose 5-phosphate reductoisomerase (396 aa).

The NADPH site is built by T10, G11, S12, I13, and N123. K124 lines the 1-deoxy-D-xylulose 5-phosphate pocket. E125 contributes to the NADPH binding site. D149 serves as a coordination point for Mn(2+). S150, E151, S185, and H208 together coordinate 1-deoxy-D-xylulose 5-phosphate. E151 serves as a coordination point for Mn(2+). NADPH is bound at residue G214. 1-deoxy-D-xylulose 5-phosphate is bound by residues S221, N226, K227, and E230. E230 is a Mn(2+) binding site.

It belongs to the DXR family. The cofactor is Mg(2+). Mn(2+) is required as a cofactor.

It carries out the reaction 2-C-methyl-D-erythritol 4-phosphate + NADP(+) = 1-deoxy-D-xylulose 5-phosphate + NADPH + H(+). It functions in the pathway isoprenoid biosynthesis; isopentenyl diphosphate biosynthesis via DXP pathway; isopentenyl diphosphate from 1-deoxy-D-xylulose 5-phosphate: step 1/6. Catalyzes the NADPH-dependent rearrangement and reduction of 1-deoxy-D-xylulose-5-phosphate (DXP) to 2-C-methyl-D-erythritol 4-phosphate (MEP). This Shewanella sp. (strain MR-7) protein is 1-deoxy-D-xylulose 5-phosphate reductoisomerase.